The sequence spans 282 residues: Pantothenate synthetase (282 aa).

30 to 37 contacts ATP; sequence MGALHRGH. His-37 acts as the Proton donor in catalysis. Residue Gln-61 participates in (R)-pantoate binding. Gln-61 lines the beta-alanine pocket. 147–150 is an ATP binding site; that stretch reads GEKD. Gln-153 contributes to the (R)-pantoate binding site. 184-187 provides a ligand contact to ATP; the sequence is LSSR.

This sequence belongs to the pantothenate synthetase family. As to quaternary structure, homodimer.

The protein localises to the cytoplasm. The catalysed reaction is (R)-pantoate + beta-alanine + ATP = (R)-pantothenate + AMP + diphosphate + H(+). It functions in the pathway cofactor biosynthesis; (R)-pantothenate biosynthesis; (R)-pantothenate from (R)-pantoate and beta-alanine: step 1/1. Its function is as follows. Catalyzes the condensation of pantoate with beta-alanine in an ATP-dependent reaction via a pantoyl-adenylate intermediate. In Rhizorhabdus wittichii (strain DSM 6014 / CCUG 31198 / JCM 15750 / NBRC 105917 / EY 4224 / RW1) (Sphingomonas wittichii), this protein is Pantothenate synthetase.